We begin with the raw amino-acid sequence, 317 residues long: MYNIILSIFYPIFLALVFPTQIFLFVVVVKYSPKYMQTLRNVLFCNCIFQTISVVLLCLLQLRQVSHLKPMEIWCYGPLRHFEAIISYCLYFVSQSTSVVSNILVLLTIYLKYEAAKNVTNKQSNKCIVIILLLVPVFVLVGAEIYSVVTHSLLPEVRYLFEVINSNVTDHSVIGYITLQTVPSYLIISIVFGSVFLLPPMGLYTRRKIIFHINSGRDTTSQLKKHQRKTFINGLTLQACLPLVSLCPIFVCYVIVIGTKSELLFEQYCISVLVLLPTFFDPYITLYSVAPYRKQIGMWLGKAKTGPMIVISSIMNL.

7 helical membrane passes run isoleucine 8–valine 28, valine 42–leucine 62, cysteine 89–isoleucine 109, isoleucine 128–valine 148, tyrosine 185–threonine 205, alanine 239–threonine 259, and isoleucine 270–alanine 290.

It belongs to the nematode receptor-like protein srd family.

The protein resides in the membrane. This Caenorhabditis elegans protein is Serpentine receptor class delta-47 (srd-47).